The sequence spans 262 residues: Abhydrolase domain-containing protein ACTT2-2 (262 aa).

The Peroxisomal targeting signal type 1 signature appears at 260-262; sequence SKL.

Belongs to the AB hydrolase superfamily. AKT2 hydrolase family.

The protein resides in the peroxisome. It functions in the pathway mycotoxin biosynthesis. Functionally, abhydrolase domain-containing protein; part of the gene clusters that mediate the biosynthesis of the host-selective toxins (HSTs) ACT-toxins responsible for brown spot of tangerine disease by the tangerine pathotype which affects tangerines and mandarins. ACT-toxins consist of three moieties, 9,10-epoxy-8-hydroxy-9-methyl-decatrienoic acid (EDA), valine and a polyketide. ACT-toxin I is toxic to both citrus and pear; toxin II the 5''-deoxy derivative of ACT-toxin I, is highly toxic to pear and slightly toxic to citrus. On cellular level, ACT-toxins affect plasma membrane of susceptible cells and cause a sudden increase in loss of K(+) after a few minutes of toxin treatment. The acyl-CoA ligase ACTT1, the hydrolase ACTT2, the enoyl-CoA hydratases ACTT3 and ACTT6, and the acyl-CoA synthetase ACTT5 are all involved in the biosynthesis of the AK-, AF- and ACT-toxin common 9,10-epoxy-8-hydroxy-9-methyl-decatrienoic acid (EDA) structural moiety. The exact role of each enzyme, and of additional enzymes identified within the AF-toxin clusters have still to be determined. On the other hand, ACTTS1 to ACTTS4 are specific to the tangerine pathotype. The function of ACTTS3 is to elongate the polyketide chain portion of ACT-toxin that is unique to this toxin. The enoyl-reductase ACTTS2 might complement the missing enoyl-reductase (ER) domain in ACTTS3 in the synthesis of the polyketide portion of ACT-toxin. The roles of the nonribosomal peptide synthetases-related proteins ACTTS1 and ACTTS4 have also still not been elucidated. The sequence is that of Abhydrolase domain-containing protein ACTT2-2 (ACTT2-2) from Alternaria alternata (Alternaria rot fungus).